The following is a 144-amino-acid chain: uncharacterized protein (144 aa).

The 143-residue stretch at 2–144 (IELDAINPNN…EDSVLLSKKL (143 aa)) folds into the N-acetyltransferase domain.

The protein belongs to the acetyltransferase family.

It localises to the cytoplasm. The protein resides in the nucleus. This is an uncharacterized protein from Schizosaccharomyces pombe (strain 972 / ATCC 24843) (Fission yeast).